The primary structure comprises 271 residues: Energy-coupling factor transporter ATP-binding protein EcfA (271 aa).

In terms of domain architecture, ABC transporter spans 2-231 (ISIQNLTFYY…PLFLQQYKLT (230 aa)). 34-41 (GHNGSGKS) is a binding site for ATP.

It belongs to the ABC transporter superfamily. Energy-coupling factor EcfA family. Forms a stable energy-coupling factor (ECF) transporter complex composed of 2 membrane-embedded substrate-binding proteins (S component), 2 ATP-binding proteins (A component) and 2 transmembrane proteins (T component).

Its subcellular location is the cell membrane. ATP-binding (A) component of a common energy-coupling factor (ECF) ABC-transporter complex. Unlike classic ABC transporters this ECF transporter provides the energy necessary to transport a number of different substrates. The sequence is that of Energy-coupling factor transporter ATP-binding protein EcfA from Aster yellows witches'-broom phytoplasma (strain AYWB).